Here is a 727-residue protein sequence, read N- to C-terminus: Epithelial splicing regulatory protein 2 (727 aa).

The disordered stretch occupies residues 1–22 (MTPPPPPPPPPGPDPAADPAAD). S83 is subject to Phosphoserine. 3 consecutive RRM domains span residues 257 to 353 (TVVR…RFLS), 358 to 438 (VILR…RSTA), and 475 to 555 (DCVR…PCST). Position 573 is a phosphoserine (S573).

This sequence belongs to the ESRP family. As to quaternary structure, interacts with RBPMS. Epithelial cell-specific.

It is found in the nucleus. Functionally, mRNA splicing factor that regulates the formation of epithelial cell-specific isoforms. Specifically regulates the expression of FGFR2-IIIb, an epithelial cell-specific isoform of FGFR2. Also regulates the splicing of CD44, CTNND1, ENAH, 3 transcripts that undergo changes in splicing during the epithelial-to-mesenchymal transition (EMT). Acts by directly binding specific sequences in mRNAs. Binds the GU-rich sequence motifs in the ISE/ISS-3, a cis-element regulatory region present in the mRNA of FGFR2. The sequence is that of Epithelial splicing regulatory protein 2 (ESRP2) from Homo sapiens (Human).